The following is a 298-amino-acid chain: Glycine--tRNA ligase alpha subunit (298 aa).

The protein belongs to the class-II aminoacyl-tRNA synthetase family. In terms of assembly, tetramer of two alpha and two beta subunits.

It localises to the cytoplasm. It catalyses the reaction tRNA(Gly) + glycine + ATP = glycyl-tRNA(Gly) + AMP + diphosphate. In Helicobacter pylori (strain Shi470), this protein is Glycine--tRNA ligase alpha subunit.